The primary structure comprises 82 residues: Defensin-like protein 75 (82 aa).

An N-terminal signal peptide occupies residues 1–26 (MAKIKSLDVITVAIILLLVIADQATA). 4 disulfide bridges follow: Cys-33/Cys-66, Cys-37/Cys-55, Cys-41/Cys-64, and Cys-45/Cys-65.

It belongs to the DEFL family.

It is found in the secreted. In Arabidopsis thaliana (Mouse-ear cress), this protein is Defensin-like protein 75 (LCR45).